The sequence spans 456 residues: 3-isopropylmalate dehydratase large subunit (456 aa).

[4Fe-4S] cluster-binding residues include cysteine 336, cysteine 396, and cysteine 399.

This sequence belongs to the aconitase/IPM isomerase family. LeuC type 1 subfamily. Heterodimer of LeuC and LeuD. Requires [4Fe-4S] cluster as cofactor.

The catalysed reaction is (2R,3S)-3-isopropylmalate = (2S)-2-isopropylmalate. It participates in amino-acid biosynthesis; L-leucine biosynthesis; L-leucine from 3-methyl-2-oxobutanoate: step 2/4. Its function is as follows. Catalyzes the isomerization between 2-isopropylmalate and 3-isopropylmalate, via the formation of 2-isopropylmaleate. The sequence is that of 3-isopropylmalate dehydratase large subunit from Staphylococcus epidermidis (strain ATCC 12228 / FDA PCI 1200).